A 762-amino-acid polypeptide reads, in one-letter code: uncharacterized protein (762 aa).

Positions 734–762 are disordered; the sequence is QQRPRVAAAAPPPPPQPPAAAVPTTQAST. The segment covering 743-753 has biased composition (pro residues); that stretch reads APPPPPQPPAA.

This is an uncharacterized protein from Ostreid herpesvirus 1 (isolate France) (OsHV-1).